The chain runs to 121 residues: MKSFVFALALIVAFACISESKSDHTGYEEEENLEDSELTDLVTAALLEELAEASEMDDLSYTEEAGGERMDKLEEMALKLKDKLKTMAEKGAQMGEKLKEMLPKAIEKLKELTEKMKNKMG.

Positions 1–22 (MKSFVFALALIVAFACISESKS) are cleaved as a signal peptide. A propeptide spanning residues 23–69 (DHTGYEEEENLEDSELTDLVTAALLEELAEASEMDDLSYTEEAGGER) is cleaved from the precursor. Met-120 bears the Methionine amide mark.

As to expression, expressed by the venom gland.

The protein localises to the secreted. Its function is as follows. Shows no antimicrobial activity against Gram-positive bacterium B.subtilis B-501 or Gram-negative bacterium E.coli DH5-alpha at concentrations up to 20 ug/ml. Shows no toxicity towards insect (S.carnaria) larvae. This Lachesana tarabaevi (Spider) protein is Met-lysine-1a.